Consider the following 592-residue polypeptide: Syntaxin-binding protein 3 (592 aa).

A mediates interaction with DOC2B region spans residues 1–255 (MAPPVAERGL…STVLHELTFQ (255 aa)).

It belongs to the STXBP/unc-18/SEC1 family. Interacts with DOC2B; the interaction is direct, occurs at the cell membrane, excludes interaction with STX4 and regulates glucose-stimulated insulin secretion. Interacts with STX4. Post-translationally, phosphorylated by PKC in platelets in response to thrombin stimulation; phosphorylation inhibits binding to STX4. Megakaryocytes and platelets.

The protein resides in the cytoplasm. The protein localises to the cytosol. It localises to the cell membrane. Together with STX4 and VAMP2, may play a role in insulin-dependent movement of GLUT4 and in docking/fusion of intracellular GLUT4-containing vesicles with the cell surface in adipocytes. In Homo sapiens (Human), this protein is Syntaxin-binding protein 3 (STXBP3).